We begin with the raw amino-acid sequence, 273 residues long: uncharacterized protein (273 aa).

A compositionally biased stretch (basic residues) spans 1–10 (MSSKKVKYNP). Disordered regions lie at residues 1 to 32 (MSSK…FGFN) and 50 to 124 (EDVE…QSSP). Composition is skewed to polar residues over residues 12 to 24 (KSAS…SASA), 55 to 64 (QSFNGKSSNL), and 92 to 124 (PQSS…QSSP). Ser-123 is subject to Phosphoserine.

It is found in the nucleus. Its subcellular location is the cytoplasm. The protein localises to the cytoskeleton. It localises to the spindle. This is an uncharacterized protein from Schizosaccharomyces pombe (strain 972 / ATCC 24843) (Fission yeast).